The sequence spans 641 residues: 1-deoxy-D-xylulose-5-phosphate synthase (641 aa).

Thiamine diphosphate contacts are provided by residues His-79 and 120–122 (AHS). Asp-151 serves as a coordination point for Mg(2+). Thiamine diphosphate is bound by residues 152–153 (GA), Asn-180, Tyr-290, and Glu-372. Asn-180 contributes to the Mg(2+) binding site.

The protein belongs to the transketolase family. DXPS subfamily. As to quaternary structure, homodimer. It depends on Mg(2+) as a cofactor. The cofactor is thiamine diphosphate.

It carries out the reaction D-glyceraldehyde 3-phosphate + pyruvate + H(+) = 1-deoxy-D-xylulose 5-phosphate + CO2. The protein operates within metabolic intermediate biosynthesis; 1-deoxy-D-xylulose 5-phosphate biosynthesis; 1-deoxy-D-xylulose 5-phosphate from D-glyceraldehyde 3-phosphate and pyruvate: step 1/1. Its function is as follows. Catalyzes the acyloin condensation reaction between C atoms 2 and 3 of pyruvate and glyceraldehyde 3-phosphate to yield 1-deoxy-D-xylulose-5-phosphate (DXP). The sequence is that of 1-deoxy-D-xylulose-5-phosphate synthase from Bradyrhizobium sp. (strain ORS 278).